The chain runs to 171 residues: uncharacterized protein (171 aa).

Disordered regions lie at residues 68–124 (NKNN…ASQQ) and 140–171 (GDEDKGMDSTLKLPERTKRDSDDEDGMFSIKN). Positions 141 to 160 (DEDKGMDSTLKLPERTKRDS) are enriched in basic and acidic residues.

This sequence belongs to the asfivirus H171R family.

The protein resides in the virion. This is an uncharacterized protein from Ornithodoros (relapsing fever ticks).